The primary structure comprises 301 residues: Probable alpha-L-glutamate ligase 1 (301 aa).

The region spanning 104 to 287 (LQLLSRKGIG…VTEPIVEYIE (184 aa)) is the ATP-grasp domain. ATP contacts are provided by residues lysine 141, 178–179 (EY), aspartate 187, and 211–213 (RSN). The Mg(2+) site is built by aspartate 248, glutamate 260, and asparagine 262. Positions 248, 260, and 262 each coordinate Mn(2+).

The protein belongs to the RimK family. Mg(2+) serves as cofactor. Requires Mn(2+) as cofactor.

The chain is Probable alpha-L-glutamate ligase 1 from Shewanella sp. (strain W3-18-1).